Consider the following 329-residue polypeptide: MQGSVTEFLKPRLVDIEQVSSTHAKVTLEPLERGFGHTLGNALRRILLSSMPGCAVTEVEIDGVLHEYSTKEGVQEDILEILLNLKGLAVRVQGKDEVILTLNKSGIGPVTAADIIHDGDVEIVKPQHVICHLTDETASISMRIKVQRGRGYVPASARIHSEEDERPIGRLLVDACYSPVERIAYNVEAARVEQRTDLDKLVIEMETNGTIDPEEAIRRAATILAEQLEAFVDLRDVRQPEVKEEKPEFDPILLRPVDDLELTVRSANCLKAEAIHYIGDLVQRTEVELLKTPNLGKKSLTEIKDVLASRGLSLGMRLENWPPASIADE.

The alpha N-terminal domain (alpha-NTD) stretch occupies residues 1 to 235 (MQGSVTEFLK…EQLEAFVDLR (235 aa)). The alpha C-terminal domain (alpha-CTD) stretch occupies residues 249 to 329 (FDPILLRPVD…NWPPASIADE (81 aa)).

This sequence belongs to the RNA polymerase alpha chain family. In terms of assembly, homodimer. The RNAP catalytic core consists of 2 alpha, 1 beta, 1 beta' and 1 omega subunit. When a sigma factor is associated with the core the holoenzyme is formed, which can initiate transcription.

It catalyses the reaction RNA(n) + a ribonucleoside 5'-triphosphate = RNA(n+1) + diphosphate. Its function is as follows. DNA-dependent RNA polymerase catalyzes the transcription of DNA into RNA using the four ribonucleoside triphosphates as substrates. In Photorhabdus laumondii subsp. laumondii (strain DSM 15139 / CIP 105565 / TT01) (Photorhabdus luminescens subsp. laumondii), this protein is DNA-directed RNA polymerase subunit alpha.